The following is a 478-amino-acid chain: ATP synthase subunit beta (478 aa).

160–167 (GGAGVGKT) contributes to the ATP binding site.

It belongs to the ATPase alpha/beta chains family. In terms of assembly, F-type ATPases have 2 components, CF(1) - the catalytic core - and CF(0) - the membrane proton channel. CF(1) has five subunits: alpha(3), beta(3), gamma(1), delta(1), epsilon(1). CF(0) has three main subunits: a(1), b(2) and c(9-12). The alpha and beta chains form an alternating ring which encloses part of the gamma chain. CF(1) is attached to CF(0) by a central stalk formed by the gamma and epsilon chains, while a peripheral stalk is formed by the delta and b chains.

The protein localises to the cell inner membrane. It carries out the reaction ATP + H2O + 4 H(+)(in) = ADP + phosphate + 5 H(+)(out). In terms of biological role, produces ATP from ADP in the presence of a proton gradient across the membrane. The catalytic sites are hosted primarily by the beta subunits. The chain is ATP synthase subunit beta from Orientia tsutsugamushi (strain Ikeda) (Rickettsia tsutsugamushi).